A 282-amino-acid polypeptide reads, in one-letter code: tRNA N(3)-cytidine methyltransferase METTL6 (282 aa).

S-adenosyl-L-methionine contacts are provided by Trp-45, Tyr-49, Gly-87, Asp-110, Asp-136, Leu-137, and Ile-157.

It belongs to the methyltransferase superfamily. METL family. Monomer. Interacts with SARS1/SerRS; interaction is mediated via tRNA(Ser) and is required for N(3)-methylcytidine methylation.

It localises to the cytoplasm. The protein localises to the nucleus. It catalyses the reaction cytidine(32) in tRNA(Ser) + S-adenosyl-L-methionine = N(3)-methylcytidine(32) in tRNA(Ser) + S-adenosyl-L-homocysteine + H(+). Its function is as follows. S-adenosyl-L-methionine-dependent methyltransferase that mediates N(3)-methylcytidine modification of residue 32 of the tRNA anticodon loop of tRNA(Ser), including tRNA(Ser)(UGA) and tRNA(Ser)(GCU). Interaction with SARS1/SerRS is required for N(3)-methylcytidine methylation. The sequence is that of tRNA N(3)-cytidine methyltransferase METTL6 (METTL6) from Pongo abelii (Sumatran orangutan).